The sequence spans 222 residues: PLASMODESMATA CALLOSE-BINDING PROTEIN 4 (222 aa).

Positions 1 to 19 (MSVLLPLCLIISMFTYSNA) are cleaved as a signal peptide. Cys22 and Cys83 form a disulfide bridge. Residues 88-187 (AASPSTTPPS…SVFPGTTLGP (100 aa)) show a composition bias toward low complexity. The interval 88-199 (AASPSTTPPS…SGGLGDPNAG (112 aa)) is disordered. Asn197 carries GPI-anchor amidated asparagine lipidation. The propeptide at 198 to 222 (AGEKLSVRTNTVVFLLTGVAAMLVI) is removed in mature form.

Contains two additional disulfide bonds.

It is found in the cell membrane. It localises to the cell junction. Its subcellular location is the plasmodesma. In Arabidopsis thaliana (Mouse-ear cress), this protein is PLASMODESMATA CALLOSE-BINDING PROTEIN 4 (PDCB4).